The chain runs to 550 residues: Hydroxylamine reductase (550 aa).

4 residues coordinate [2Fe-2S] cluster: C3, C6, C18, and C25. Residues H249, E273, C317, C405, C433, C458, E492, and K494 each coordinate hybrid [4Fe-2O-2S] cluster. At C405 the chain carries Cysteine persulfide.

Belongs to the HCP family. Requires [2Fe-2S] cluster as cofactor. Hybrid [4Fe-2O-2S] cluster serves as cofactor.

It is found in the cytoplasm. The enzyme catalyses A + NH4(+) + H2O = hydroxylamine + AH2 + H(+). Catalyzes the reduction of hydroxylamine to form NH(3) and H(2)O. The chain is Hydroxylamine reductase from Escherichia coli O6:H1 (strain CFT073 / ATCC 700928 / UPEC).